The following is a 499-amino-acid chain: Ubiquitin carboxyl-terminal hydrolase 16 (499 aa).

In terms of domain architecture, USP spans 53 to 497 (VGLINRGNDC…YAYMLYYERV (445 aa)). Cys-62 acts as the Nucleophile in catalysis. The active-site Proton acceptor is His-407.

Belongs to the peptidase C19 family.

The catalysed reaction is Thiol-dependent hydrolysis of ester, thioester, amide, peptide and isopeptide bonds formed by the C-terminal Gly of ubiquitin (a 76-residue protein attached to proteins as an intracellular targeting signal).. The polypeptide is Ubiquitin carboxyl-terminal hydrolase 16 (UBP16) (Saccharomyces cerevisiae (strain ATCC 204508 / S288c) (Baker's yeast)).